We begin with the raw amino-acid sequence, 47 residues long: Potassium channel toxin gamma-KTx 5.2 (47 aa).

4 cysteine pairs are disulfide-bonded: Cys5–Cys23, Cys11–Cys34, Cys20–Cys39, and Cys24–Cys41.

It belongs to the ergtoxin family. Gamma-KTx 5 subfamily. Expressed by the venom gland.

The protein localises to the secreted. Its function is as follows. Reversibly blocks Kv11/ERG potassium channels. The polypeptide is Potassium channel toxin gamma-KTx 5.2 (Centruroides gracilis (Slenderbrown scorpion)).